Reading from the N-terminus, the 260-residue chain is Pyridoxine 5'-phosphate synthase (260 aa).

The 3-amino-2-oxopropyl phosphate site is built by N10 and R21. Residue H46 is the Proton acceptor of the active site. 1-deoxy-D-xylulose 5-phosphate contacts are provided by R48 and H53. The active-site Proton acceptor is the E76. Residue T113 coordinates 1-deoxy-D-xylulose 5-phosphate. Catalysis depends on H204, which acts as the Proton donor. Residues D205 and 227–228 (GH) each bind 3-amino-2-oxopropyl phosphate.

It belongs to the PNP synthase family. As to quaternary structure, homooctamer; tetramer of dimers.

It localises to the cytoplasm. The catalysed reaction is 3-amino-2-oxopropyl phosphate + 1-deoxy-D-xylulose 5-phosphate = pyridoxine 5'-phosphate + phosphate + 2 H2O + H(+). It participates in cofactor biosynthesis; pyridoxine 5'-phosphate biosynthesis; pyridoxine 5'-phosphate from D-erythrose 4-phosphate: step 5/5. In terms of biological role, catalyzes the complicated ring closure reaction between the two acyclic compounds 1-deoxy-D-xylulose-5-phosphate (DXP) and 3-amino-2-oxopropyl phosphate (1-amino-acetone-3-phosphate or AAP) to form pyridoxine 5'-phosphate (PNP) and inorganic phosphate. In Xylella fastidiosa (strain M23), this protein is Pyridoxine 5'-phosphate synthase.